The following is a 390-amino-acid chain: Cyclic amide hydrolase (390 aa).

Residues 1–118 (MPNPEASLSP…TVVTQEWVAD (118 aa)) form an RU A region. Substrate contacts are provided by residues Arg66 and 97–98 (SG). Positions 127–268 (GLVVGRGHTE…GEVLLLANSA (142 aa)) are RU B. Lys177 is an active-site residue. Substrate is bound by residues Asn213, 251-252 (SS), Lys346, and 365-366 (SG). The Nucleophile role is filled by Ser251. An RU C region spans residues 274–390 (LRIGHGITRD…VAAVVRRLPA (117 aa)).

Belongs to the cyclic amide hydrolase (CyAH) family. Homotetramer; disulfide-linked. The disulfide forms between 2 monomers in the tetramer, such that each tetramer contains 2 sets of vicinal disulfides.

In terms of biological role, cyclic amide hydrolase of unknown substrate specificity. Catalyzes the hydrolytic ring-opening of a cyclic amide. Does not act on cyanuric acid nor barbituric acid. The protein is Cyclic amide hydrolase of Pseudofrankia inefficax (strain DSM 45817 / CECT 9037 / DDB 130130 / EuI1c) (Frankia inefficax).